A 133-amino-acid polypeptide reads, in one-letter code: Aspartate 1-decarboxylase (133 aa).

Ser-26 acts as the Schiff-base intermediate with substrate; via pyruvic acid in catalysis. Ser-26 is modified (pyruvic acid (Ser)). Residue Thr-58 coordinates substrate. The Proton donor role is filled by Tyr-59. Residue 74-76 (GAA) coordinates substrate.

This sequence belongs to the PanD family. In terms of assembly, heterooctamer of four alpha and four beta subunits. Requires pyruvate as cofactor. Is synthesized initially as an inactive proenzyme, which is activated by self-cleavage at a specific serine bond to produce a beta-subunit with a hydroxyl group at its C-terminus and an alpha-subunit with a pyruvoyl group at its N-terminus.

Its subcellular location is the cytoplasm. It catalyses the reaction L-aspartate + H(+) = beta-alanine + CO2. It participates in cofactor biosynthesis; (R)-pantothenate biosynthesis; beta-alanine from L-aspartate: step 1/1. Functionally, catalyzes the pyruvoyl-dependent decarboxylation of aspartate to produce beta-alanine. This is Aspartate 1-decarboxylase from Legionella pneumophila (strain Lens).